A 211-amino-acid polypeptide reads, in one-letter code: Protein YCF54, chloroplastic (211 aa).

A chloroplast-targeting transit peptide spans 1–80 (MWSVTGALTV…GESTKYHFLV (80 aa)).

Belongs to the ycf54 family. As to quaternary structure, interacts with LFNR1 and CRD1/CHL27 in chloroplasts.

The protein resides in the plastid. It is found in the chloroplast. In terms of biological role, involved in the biosynthesis of chlorophyll; acts probably as a scaffolding factor in the MgProto monomethylester (MgProtoME) cyclase complex to stabilize CRD1/CHL27, the catalytic subunit which catalyzes the formation of a fifth isocyclic ring to tetrapyrroles to form protochlorophyllide. In Arabidopsis thaliana (Mouse-ear cress), this protein is Protein YCF54, chloroplastic.